The following is a 302-amino-acid chain: Acidic endochitinase (302 aa).

The N-terminal stretch at 1 to 30 (MTNMTLRKHVIYFLFFISCSLSKPSDASRG) is a signal peptide. The region spanning 31-302 (GIAIYWGQNG…GYSSSILASV (272 aa)) is the GH18 domain. Disulfide bonds link C49–C96 and C79–C86. Catalysis depends on E156, which acts as the Proton donor. C188 and C217 form a disulfide bridge.

The protein belongs to the glycosyl hydrolase 18 family. Chitinase class III subfamily.

It localises to the secreted. It is found in the extracellular space. The enzyme catalyses Random endo-hydrolysis of N-acetyl-beta-D-glucosaminide (1-&gt;4)-beta-linkages in chitin and chitodextrins.. Its function is as follows. This protein functions as a defense against chitin containing fungal pathogens. The chain is Acidic endochitinase (CHIB1) from Arabidopsis thaliana (Mouse-ear cress).